Reading from the N-terminus, the 627-residue chain is Druantia protein DruC (627 aa).

Its subcellular location is the cytoplasm. Its function is as follows. Component of antiviral defense system Druantia type I, composed of DruA, DruB, DruC, DruD and DruE. Expression of Druantia in E.coli (strain MG1655) confers resistance to phage lambda, SECphi18, SECphi27 and T4. The protein is Druantia protein DruC of Escherichia coli (strain UMEA 4076-1).